A 387-amino-acid polypeptide reads, in one-letter code: Colicin-N (387 aa).

Residues 1–11 are compositionally biased toward polar residues; that stretch reads MGSNGADNAHN. Positions 1 to 106 are disordered; sequence MGSNGADNAH…ITITPDNSKP (106 aa). The span at 14 to 30 shows a compositional bias: gly residues; that stretch reads FGGGKNPGIGNTSGAGS. The segment covering 31–48 has biased composition (low complexity); it reads NGSASSNRGNSNGWSWSN. The segment covering 78–87 has biased composition (gly residues); the sequence is GNSGNRGNNG. A run of 2 helical transmembrane segments spans residues 325–345 and 350–370; these read IIGG…LSFL and LAVT…SSFI.

This sequence belongs to the channel forming colicin family.

The protein resides in the cell membrane. In terms of biological role, this colicin is a channel-forming colicin. This class of transmembrane toxins depolarize the cytoplasmic membrane, leading to dissipation of cellular energy. Functionally, colicins are polypeptide toxins produced by and active against E.coli and closely related bacteria. This is Colicin-N (cna) from Escherichia coli.